Consider the following 278-residue polypeptide: Putative peptidase Cgl1093 (278 aa).

An N-terminal signal peptide occupies residues 1 to 32 (MSSASFTTKALSVLAALTAASAPLVAASPAHA). The region spanning 33-236 (LANARNVTGS…HAEWIAYYTG (204 aa)) is the Peptidase S1 domain. A disulfide bond links Cys-59 and Cys-75. Catalysis depends on charge relay system residues His-74, Asp-123, and Ser-189.

It belongs to the peptidase S1 family.

Its subcellular location is the secreted. This Corynebacterium glutamicum (strain ATCC 13032 / DSM 20300 / JCM 1318 / BCRC 11384 / CCUG 27702 / LMG 3730 / NBRC 12168 / NCIMB 10025 / NRRL B-2784 / 534) protein is Putative peptidase Cgl1093.